The chain runs to 202 residues: MAFNIITPGRVYSATSLTFVSTIKAAFVKPPLASPSRRNLLRFSSSPLSFPSLRRGFHGGRIVAMGSSAPESVNKPEEEWRAILSPEQFRILRQKGTEYPGTGEYNKVFDDGIYCCAGCGTPLYKSTTKFDSGCGWPAFFDGLPGAITRTPDPDGRRIEITCAACGGHLGHVFKGEGFPTPTDERHCVNSISLKFTPENPTL.

The N-terminal 63 residues, 1–63 (MAFNIITPGR…RRGFHGGRIV (63 aa)), are a transit peptide targeting the chloroplast. A MsrB domain is found at 77-198 (EEEWRAILSP…NSISLKFTPE (122 aa)). Zn(2+) contacts are provided by C116, C119, C162, and C165. C134 and C187 are joined by a disulfide. The active-site Nucleophile is C187.

This sequence belongs to the MsrB Met sulfoxide reductase family. Requires Zn(2+) as cofactor. As to expression, expressed in stems, young leaves, floral buds and flowers. Expressed at low levels in roots, mature leaves and siliques (at protein level).

It localises to the plastid. It is found in the chloroplast. The enzyme catalyses L-methionyl-[protein] + [thioredoxin]-disulfide + H2O = L-methionyl-(R)-S-oxide-[protein] + [thioredoxin]-dithiol. Its function is as follows. Catalyzes the reduction of methionine sulfoxide (MetSO) to methionine in proteins. Specifically reduces the MetSO R-enantiomer. Plays a protective role against oxidative stress by restoring activity to proteins that have been inactivated by methionine oxidation. May play an essential function in association with MSRB1 in maintaining vegetative growth during environmental constraints, through the preservation of photosynthetic antennae. MSRB1 and MSRB2 account for most of the leaf peptide MSR capacity. The polypeptide is Peptide methionine sulfoxide reductase B2, chloroplastic (Arabidopsis thaliana (Mouse-ear cress)).